A 91-amino-acid polypeptide reads, in one-letter code: HssA/B-like protein 24 (91 aa).

The protein belongs to the hssA/B family.

The sequence is that of HssA/B-like protein 24 (hssl24) from Dictyostelium discoideum (Social amoeba).